Reading from the N-terminus, the 255-residue chain is ETS-related transcription factor Elf-5 (255 aa).

One can recognise a PNT domain in the interval 33–119 (YPAFEHQTAC…FILQSIRSQG (87 aa)). Residues 163-244 (SHLWEFVRDL…VDRRLVYKFG (82 aa)) constitute a DNA-binding region (ETS).

It belongs to the ETS family.

It is found in the nucleus. Its function is as follows. Transcriptionally activator that may play a role in regulating the later stages of keratinocytes terminal differentiation. Binds to DNA sequences containing the consensus nucleotide core sequence GGA[AT]. The polypeptide is ETS-related transcription factor Elf-5 (ELF5) (Bos taurus (Bovine)).